We begin with the raw amino-acid sequence, 816 residues long: Protein EFR3 homolog B (816 aa).

Over residues 206-219 (SGEGTESRSPSPLQ) the composition is skewed to polar residues. Positions 206–230 (SGEGTESRSPSPLQASEKEKESPAE) are disordered. Positions 221-230 (SEKEKESPAE) are enriched in basic and acidic residues.

This sequence belongs to the EFR3 family. As to quaternary structure, component of a phosphatidylinositol 4-kinase (PI4K) complex. Post-translationally, palmitoylated at its N-terminus, anchoring the protein to the plasma membrane.

The protein localises to the cell membrane. In terms of biological role, component of a complex required to localize phosphatidylinositol 4-kinase (PI4K) to the plasma membrane. The complex acts as a regulator of phosphatidylinositol 4-phosphate (PtdIns(4)P) synthesis. In the complex, efr3b probably acts as the membrane-anchoring component. The polypeptide is Protein EFR3 homolog B (efr3b) (Danio rerio (Zebrafish)).